Here is a 485-residue protein sequence, read N- to C-terminus: NADH-quinone oxidoreductase subunit N (485 aa).

The next 14 helical transmembrane spans lie at L8–I28, F35–V55, G71–A91, F105–L125, A127–F147, Y159–A179, L203–F223, P235–M255, V271–Q291, L297–Q317, V326–L346, A373–I393, W408–V430, and I455–I475.

Belongs to the complex I subunit 2 family. As to quaternary structure, NDH-1 is composed of 13 different subunits. Subunits NuoA, H, J, K, L, M, N constitute the membrane sector of the complex.

The protein localises to the cell inner membrane. The catalysed reaction is a quinone + NADH + 5 H(+)(in) = a quinol + NAD(+) + 4 H(+)(out). NDH-1 shuttles electrons from NADH, via FMN and iron-sulfur (Fe-S) centers, to quinones in the respiratory chain. The immediate electron acceptor for the enzyme in this species is believed to be ubiquinone. Couples the redox reaction to proton translocation (for every two electrons transferred, four hydrogen ions are translocated across the cytoplasmic membrane), and thus conserves the redox energy in a proton gradient. This chain is NADH-quinone oxidoreductase subunit N, found in Salmonella arizonae (strain ATCC BAA-731 / CDC346-86 / RSK2980).